We begin with the raw amino-acid sequence, 113 residues long: Mitochondrial zinc maintenance protein 1, mitochondrial (113 aa).

Belongs to the complex I LYR family. MZM1 subfamily. In terms of assembly, interacts with RIP1.

It is found in the mitochondrion matrix. Assembly factor required for Rieske Fe-S protein RIP1 incorporation into the cytochrome b-c1 (CIII) complex. Functions as a chaperone, binding to this subunit within the mitochondrial matrix and stabilizing it prior to its translocation and insertion into the late CIII dimeric intermediate within the mitochondrial inner membrane. Modulates the mitochondrial matrix zinc pool. This is Mitochondrial zinc maintenance protein 1, mitochondrial (MZM1) from Talaromyces stipitatus (strain ATCC 10500 / CBS 375.48 / QM 6759 / NRRL 1006) (Penicillium stipitatum).